The sequence spans 99 residues: Cell division topological specificity factor (99 aa).

The protein belongs to the MinE family.

In terms of biological role, prevents the cell division inhibition by proteins MinC and MinD at internal division sites while permitting inhibition at polar sites. This ensures cell division at the proper site by restricting the formation of a division septum at the midpoint of the long axis of the cell. The sequence is that of Cell division topological specificity factor from Tolumonas auensis (strain DSM 9187 / NBRC 110442 / TA 4).